We begin with the raw amino-acid sequence, 374 residues long: Flagellar P-ring protein 1 (374 aa).

The first 26 residues, 1–26 (MVPNLMVIKKHLIGLLLILCPLSLQA), serve as a signal peptide directing secretion.

The protein belongs to the FlgI family. As to quaternary structure, the basal body constitutes a major portion of the flagellar organelle and consists of four rings (L,P,S, and M) mounted on a central rod.

It is found in the periplasm. The protein resides in the bacterial flagellum basal body. Assembles around the rod to form the L-ring and probably protects the motor/basal body from shearing forces during rotation. This chain is Flagellar P-ring protein 1, found in Photobacterium profundum (strain SS9).